The following is a 306-amino-acid chain: MAAIIVHGGAGTIRKEERIPKVIEGVREAVLAGWRELKRGSALDAVEEAVKALEDNPIFNAGTGSVLTLDGKVEMDAAIMRGKTLDAGAVAGIWGVKNPISVARKVMEKTDHVLLIGEGAVKFARLLGFEEYDPITEERLKQWEELRKKLIEKGETKHWKKLNELIKEYPEVLRSTVGAVAFDGEEVVAGTSTGGVFLKMFGRVGDTPIIGGGTYANEVAGASCTGLGEVAIKLALAKSAADFVRLGMDAQTASEAAISLATKYFGPDTMGIIMVDAKGNVGFAKNTKHMSYAFMKDGMDEPEAGV.

Thr-176 (nucleophile) is an active-site residue. Residues 203–206 (RVGD) and 225–228 (TGLG) each bind substrate.

Belongs to the Ntn-hydrolase family. As to quaternary structure, heterotetramer of two alpha and two beta chains arranged as a dimer of alpha/beta heterodimers. The uncleaved protein forms homodimers. Autocleaved. Generates the alpha and beta subunits. The N-terminal residue of the beta subunit is thought to be responsible for the nucleophile hydrolase activity. Predominantly produced in the uncleaved form when gene expression is induced at 37 degrees Celsius with 0.5 mM IPTG. When produced at 42 degrees Celsius without adding IPTG, approximately 90% of the protein is found in the cleaved form, while the remaining 10% is observed as uncleaved precursor. Undergoes complete auto-cleavage within 24 hours at 37 degrees Celsius.

It catalyses the reaction L-asparagine + H2O = L-aspartate + NH4(+). With respect to regulation, undergoes auto-cleavage in a temperature-dependent and glycine-independent manner. Metal ions and EDTA do not have any significant effect on enzyme activity, indicating that activity is metal-independent. In terms of biological role, catalyzes the hydrolysis of L-asparagine into L-aspartate and ammonia. Also displays D-asparaginase activity, which is about 10% of the L-asparaginase activity. Does not exhibit glutaminase activity. This chain is Plant-type L-asparaginase, found in Thermococcus kodakarensis (strain ATCC BAA-918 / JCM 12380 / KOD1) (Pyrococcus kodakaraensis (strain KOD1)).